The chain runs to 677 residues: Polyunsaturated fatty acid lipoxygenase ALOX15B (677 aa).

In terms of domain architecture, PLAT spans 2–125; sequence AKFRVRVSTG…ELVLREGAAK (124 aa). Ca(2+) is bound by residues Gly-15, Gly-17, Asp-39, His-40, Gly-42, Glu-44, Asp-86, and Ala-87. Positions 126–677 constitute a Lipoxygenase domain; it reads VSWQDHHRTL…PPLIENSVSI (552 aa). The Fe cation site is built by His-374, His-379, His-554, and Ile-677.

This sequence belongs to the lipoxygenase family. Requires Fe cation as cofactor.

The protein resides in the cytoplasm. The protein localises to the cytosol. It localises to the cell membrane. It is found in the cytoskeleton. Its subcellular location is the membrane. The protein resides in the cell junction. The protein localises to the adherens junction. It localises to the focal adhesion. It is found in the nucleus. It carries out the reaction (5Z,8Z,11Z,14Z)-eicosatetraenoate + O2 = (15S)-hydroperoxy-(5Z,8Z,11Z,13E)-eicosatetraenoate. It catalyses the reaction (9Z,12Z)-octadecadienoate + O2 = 13-hydroperoxy-(9Z,11E)-octadecadienoate. The enzyme catalyses (5S)-hydroxy-(6E,8Z,11Z,14Z)-eicosatetraenoate + O2 = (5S)-hydroxy-(15S)-hydroperoxy-(6E,8Z,11Z,13E)-eicosatetraenoate. The catalysed reaction is (5Z,8Z,11Z,14Z)-eicosatetraenoate + O2 = 5-hydroperoxy-(6E,8Z,11Z,14Z)-eicosatetraenoate. It carries out the reaction (5S,6R)-dihydroxy-(7E,9E,11Z,14Z)-eicosatetraenoate + O2 = (5S,6R)-dihydroxy-(15S)-hydroperoxy-(7E,9E,11Z,13E)-eicosatetraenoate. It catalyses the reaction (5S)-hydroperoxy-(6E,8Z,11Z,14Z)-eicosatetraenoate + O2 = (5S,15S)-dihydroperoxy-(6E,8Z,11Z,13E)-eicosatetraenoate. The enzyme catalyses 2-(5Z,8Z,11Z,14Z-eicosatetraenoyl)-glycerol + O2 = 2-[15(S)-hydroperoxy-(5Z,8Z,11Z,13E)-eicosatetraenoyl]-glycerol. The catalysed reaction is (8S)-hydroperoxy-(5Z,9E,11Z,14Z)-eicosatetraenoate + O2 = (8S,15S)-dihydroperoxy-(5Z,9E,11Z,13E)-eicosatetraenoate. It carries out the reaction N-(5Z,8Z,11Z,14Z)-eicosatetraenoyl-L-alanine + O2 = N-(15S)-hydroperoxy-(5Z,8Z,11Z,13E)-eicosatetraenoyl-alanine. It catalyses the reaction N-(5Z,8Z,11Z,14Z)-eicosatetraenoyl-gamma-aminobutanoate + O2 = N-(15S)-hydroperoxy-(5Z,8Z,11Z,13E)-eicosatetraenoyl-gamma-aminobutanoate. The enzyme catalyses N-(5Z,8Z,11Z,14Z)-eicosatetraenoyl-glycine + O2 = N-(15S)-hydroperoxy-(5Z,8Z,11Z,13E)-eicosatetraenoyl-glycine. The catalysed reaction is N-(5Z,8Z,11Z,14Z)-eicosatetraenoyl-taurine + O2 = N-(15S)-hydroperoxy-(5Z,8Z,11Z,13E)-eicosatetraenoyl-taurine. It carries out the reaction 2-(5Z,8Z,11Z,14Z-eicosatetraenoyl)-glycerol + O2 = 2-[12-hydroperoxy-(5Z,8Z,10E,14Z)-eicosatetraenoyl]-glycerol. It catalyses the reaction 1-octadecanoyl-2-(5Z,8Z,11Z,14Z-eicosatetraenoyl)-sn-glycero-3-phosphocholine + O2 = 1-octadecanoyl-2-(15-hydroperoxy-5Z,8Z,11Z,13E-eicosatetraenoyl)-sn-glycero-3-phosphocholine. The enzyme catalyses a 1-acyl-2-(5Z,8Z,11Z,14Z-eicosatetraenoyl)-sn-glycero-3-phospho-(1D-myo-inositol) + O2 = a 1-acyl-2-(15-hydroperoxy-5Z,8Z,11Z,13E-eicosatetraenoyl)-sn-glycero-3-phospho-(1D-myo-inositol). The catalysed reaction is a 1-acyl-2-(8Z,11Z,14Z-eicosatrienoyl)-sn-glycero-3-phospho-(1D-myo-inositol) + O2 = a 1-acyl-2-(15-hydroperoxy-8Z,11Z,13E-eicosatrienoyl)-sn-glycero-3-phospho-(1D-myo-inositol). It carries out the reaction 1-octadecanoyl-2-(5Z,8Z,11Z,14Z)-eicosatetraenoyl-sn-glycero-3-phosphoethanolamine + O2 = 1-octadecanoyl-2-(15-hydroperoxy-5Z,8Z,11Z,13E-eicosatetraenoyl)-sn-glycero-3-phosphoethanolamine. It catalyses the reaction 1-octadecanoyl-2-(5Z,8Z,11Z,14Z-eicosatetraenoyl)-sn-glycero-3-phospho-(1D-myo-inositol) + O2 = 1-octadecanoyl-2-(15-hydroperoxy-5Z,8Z,11Z,13E-eicosatetraenoyl)-sn-glycero-3-phospho-(1D-myo-inositol). The enzyme catalyses (8Z,11Z,14Z)-eicosatrienoate + O2 = 15-hydroperoxy-(8Z,11Z,13E)-eicosatrienoate. The catalysed reaction is (7S)-hydroperoxy-(4Z,8E,10Z,13Z,16Z,19Z)-docosahexaenoate + O2 = (7S,17S)-dihydroperoxy-(4Z,8E,10Z,13Z,15E,19Z)-docosahexaenoate. Its pathway is lipid metabolism; hydroperoxy eicosatetraenoic acid biosynthesis. Non-heme iron-containing dioxygenase that catalyzes the stereo-specific peroxidation of free and esterified polyunsaturated fatty acids (PUFAs) generating a spectrum of bioactive lipid mediators. Inserts a peroxyl group at C15 of arachidonate ((5Z,8Z,11Z,14Z)-eicosatetraenoate) producing (15S)-hydroperoxyeicosatetraenoate/(15S)-HPETE. Also peroxidizes linoleate ((9Z,12Z)-octadecadienoate) to 13-hydroperoxyoctadecadienoate/13-HPODE. Oxygenates arachidonyl derivatives such as 2-arachidonoylglycerol (2-AG) leading to the production and extracellular release of 15-hydroxyeicosatetraenoyl glycerol (15-HETE-G) that acts as a peroxisome proliferator-activated receptor alpha agonist. Has the ability to efficiently class-switch ALOX5 pro-inflammatory mediators into anti-inflammatory intermediates. Participates in the sequential oxidations of DHA ((4Z,7Z,10Z,13Z,16Z,19Z)-docosahexaenoate) to generate specialized pro-resolving mediators (SPMs) resolvin D5 ((7S,17S)-diHPDHA), which can actively down-regulate the immune response and have anti-aggregation properties with platelets. In addition to free PUFAs hydrolyzed from phospholipids, it directly oxidizes PUFAs esterified to membrane-bound phospholipids. Has no detectable 8S-lipoxygenase activity on arachidonate but reacts with (8S)-HPETE to produce (8S,15S)-diHPETE. May regulate progression through the cell cycle and cell proliferation. May also regulate cytokine secretion by macrophages and therefore play a role in the immune response. May also regulate macrophage differentiation into proatherogenic foam cells. This is Polyunsaturated fatty acid lipoxygenase ALOX15B from Rattus norvegicus (Rat).